The chain runs to 139 residues: Proline-rich nuclear receptor coactivator 2 (139 aa).

Disordered regions lie at residues 1–51 (MGGG…GYNS), 61–80 (NGGK…SLSG), and 89–110 (ANQN…LPKP). Polar residues-rich tracts occupy residues 11–36 (APQS…NSQM) and 61–79 (NGGK…SSLS). Residues 99–105 (SEPPSPS) carry the SH3-binding motif. Residues 101–110 (PPSPSVLPKP) are compositionally biased toward pro residues.

It belongs to the PNRC family. PNRC2 subfamily. As to quaternary structure, interacts with UPF1/RENT1; preferentially interacts with hyperphosphorylated form. Interacts with DCP1A. Interacts with many nuclear receptors including ESR1, ESRRA, ESRRG, NR3C1/GR, NR5A1, PGR, TR, RAR and RXR. Expressed in heart, lung, muscle and brain.

The protein resides in the nucleus. It localises to the cytoplasm. It is found in the P-body. Its function is as follows. Involved in nonsense-mediated mRNA decay (NMD) by acting as a bridge between the mRNA decapping complex and the NMD machinery. May act by targeting the NMD machinery to the P-body and recruiting the decapping machinery to aberrant mRNAs. Required for UPF1/RENT1 localization to the P-body. Plays a role in glucocorticoid receptor-mediated mRNA degradation by interacting with the glucocorticoid receptor NR3C1 in a ligand-dependent manner when it is bound to the 5' UTR of target mRNAs and recruiting the RNA helicase UPF1 and the mRNA-decapping enzyme DCP1A, leading to RNA decay. Also acts as a nuclear receptor coactivator. May play a role in controlling the energy balance between energy storage and energy expenditure. This is Proline-rich nuclear receptor coactivator 2 (PNRC2) from Homo sapiens (Human).